The following is a 574-amino-acid chain: Splicing factor U2af large subunit A (574 aa).

Positions 1–180 are disordered; it reads MAEHEEQPYE…SKRVSGFDQG (180 aa). Low complexity predominate over residues 18 to 41; that stretch reads PAPASAYAEYPAPEGSPPAAAAKP. Positions 53 to 143 are enriched in basic and acidic residues; the sequence is RSQHETQPHD…ERRRDRDRDG (91 aa). Residues 144 to 172 show a composition bias toward basic residues; it reads HRRHRSRSRSPSKGRDRRSRSRSRSRSSK. RRM domains lie at 238–321, 358–436, and 479–565; these read RRVY…RPTD, DRIF…RANQ, and QVVS…YPED.

The protein belongs to the splicing factor SR family.

The protein resides in the nucleus. Its function is as follows. Necessary for the splicing of pre-mRNA. This is Splicing factor U2af large subunit A (U2AF65A) from Oryza sativa subsp. japonica (Rice).